A 471-amino-acid polypeptide reads, in one-letter code: GTPase Der (471 aa).

2 EngA-type G domains span residues 3–168 and 178–353; these read PIVA…PDLS and VRVA…ANHA. Residues 9 to 16, 56 to 60, 120 to 123, 184 to 191, 231 to 235, and 296 to 299 contribute to the GTP site; these read GRPNVGKS, DTGGI, NKVE, DTAGM, and NKWD. The 85-residue stretch at 354–438 folds into the KH-like domain; that stretch reads RRISTRELND…PINLYFRTRE (85 aa).

Belongs to the TRAFAC class TrmE-Era-EngA-EngB-Septin-like GTPase superfamily. EngA (Der) GTPase family. In terms of assembly, associates with the 50S ribosomal subunit.

Its function is as follows. GTPase that plays an essential role in the late steps of ribosome biogenesis. In Symbiobacterium thermophilum (strain DSM 24528 / JCM 14929 / IAM 14863 / T), this protein is GTPase Der.